A 356-amino-acid polypeptide reads, in one-letter code: Protein RecA (356 aa).

67-74 (GPESSGKT) is an ATP binding site.

Belongs to the RecA family.

It localises to the cytoplasm. Functionally, can catalyze the hydrolysis of ATP in the presence of single-stranded DNA, the ATP-dependent uptake of single-stranded DNA by duplex DNA, and the ATP-dependent hybridization of homologous single-stranded DNAs. It interacts with LexA causing its activation and leading to its autocatalytic cleavage. This is Protein RecA from Yersinia pseudotuberculosis serotype I (strain IP32953).